Here is a 211-residue protein sequence, read N- to C-terminus: Thiamine-phosphate synthase (211 aa).

4-amino-2-methyl-5-(diphosphooxymethyl)pyrimidine is bound by residues 37-41 and Asn69; that span reads QLRIK. Residues Asp70 and Asp89 each contribute to the Mg(2+) site. Ser108 is a 4-amino-2-methyl-5-(diphosphooxymethyl)pyrimidine binding site. Residue 134–136 participates in 2-[(2R,5Z)-2-carboxy-4-methylthiazol-5(2H)-ylidene]ethyl phosphate binding; that stretch reads TQT. Lys137 serves as a coordination point for 4-amino-2-methyl-5-(diphosphooxymethyl)pyrimidine. Residues Gly166 and 186–187 contribute to the 2-[(2R,5Z)-2-carboxy-4-methylthiazol-5(2H)-ylidene]ethyl phosphate site; that span reads VS.

Belongs to the thiamine-phosphate synthase family. Requires Mg(2+) as cofactor.

It carries out the reaction 2-[(2R,5Z)-2-carboxy-4-methylthiazol-5(2H)-ylidene]ethyl phosphate + 4-amino-2-methyl-5-(diphosphooxymethyl)pyrimidine + 2 H(+) = thiamine phosphate + CO2 + diphosphate. The catalysed reaction is 2-(2-carboxy-4-methylthiazol-5-yl)ethyl phosphate + 4-amino-2-methyl-5-(diphosphooxymethyl)pyrimidine + 2 H(+) = thiamine phosphate + CO2 + diphosphate. The enzyme catalyses 4-methyl-5-(2-phosphooxyethyl)-thiazole + 4-amino-2-methyl-5-(diphosphooxymethyl)pyrimidine + H(+) = thiamine phosphate + diphosphate. It functions in the pathway cofactor biosynthesis; thiamine diphosphate biosynthesis; thiamine phosphate from 4-amino-2-methyl-5-diphosphomethylpyrimidine and 4-methyl-5-(2-phosphoethyl)-thiazole: step 1/1. Condenses 4-methyl-5-(beta-hydroxyethyl)thiazole monophosphate (THZ-P) and 2-methyl-4-amino-5-hydroxymethyl pyrimidine pyrophosphate (HMP-PP) to form thiamine monophosphate (TMP). This is Thiamine-phosphate synthase from Enterobacter sp. (strain 638).